The primary structure comprises 421 residues: Serine--tRNA ligase (421 aa).

230–232 (TAE) serves as a coordination point for L-serine. ATP is bound at residue 261–263 (RRE). Glu-284 lines the L-serine pocket. 348-351 (EISS) contacts ATP. Position 383 (Ser-383) interacts with L-serine.

Belongs to the class-II aminoacyl-tRNA synthetase family. Type-1 seryl-tRNA synthetase subfamily. As to quaternary structure, homodimer. The tRNA molecule binds across the dimer.

Its subcellular location is the cytoplasm. The enzyme catalyses tRNA(Ser) + L-serine + ATP = L-seryl-tRNA(Ser) + AMP + diphosphate + H(+). The catalysed reaction is tRNA(Sec) + L-serine + ATP = L-seryl-tRNA(Sec) + AMP + diphosphate + H(+). It functions in the pathway aminoacyl-tRNA biosynthesis; selenocysteinyl-tRNA(Sec) biosynthesis; L-seryl-tRNA(Sec) from L-serine and tRNA(Sec): step 1/1. Functionally, catalyzes the attachment of serine to tRNA(Ser). Is also able to aminoacylate tRNA(Sec) with serine, to form the misacylated tRNA L-seryl-tRNA(Sec), which will be further converted into selenocysteinyl-tRNA(Sec). The sequence is that of Serine--tRNA ligase from Finegoldia magna (strain ATCC 29328 / DSM 20472 / WAL 2508) (Peptostreptococcus magnus).